A 155-amino-acid polypeptide reads, in one-letter code: Putative pre-16S rRNA nuclease (155 aa).

It belongs to the YqgF nuclease family.

The protein localises to the cytoplasm. Could be a nuclease involved in processing of the 5'-end of pre-16S rRNA. The polypeptide is Putative pre-16S rRNA nuclease (Wolbachia pipientis wMel).